We begin with the raw amino-acid sequence, 611 residues long: tRNA uridine 5-carboxymethylaminomethyl modification enzyme MnmG (611 aa).

14-19 provides a ligand contact to FAD; sequence GAGHAG. 274–288 provides a ligand contact to NAD(+); it reads GPRYCPSIEDKIVKF.

The protein belongs to the MnmG family. As to quaternary structure, homodimer. Heterotetramer of two MnmE and two MnmG subunits. The cofactor is FAD.

The protein resides in the cytoplasm. Functionally, NAD-binding protein involved in the addition of a carboxymethylaminomethyl (cmnm) group at the wobble position (U34) of certain tRNAs, forming tRNA-cmnm(5)s(2)U34. The chain is tRNA uridine 5-carboxymethylaminomethyl modification enzyme MnmG from Chlamydia abortus (strain DSM 27085 / S26/3) (Chlamydophila abortus).